The sequence spans 391 residues: uncharacterized protein (391 aa).

The next 12 membrane-spanning stretches (helical) occupy residues 7–27 (FILV…LPVI), 39–59 (AING…SPFM), 66–88 (LGFK…GFIW), 92–111 (VWVW…MLHF), 131–151 (SIYG…VPLV), 156–176 (SLPF…VFFL), 197–217 (FYQA…YGFL), 239–259 (VAII…PLGI), 269–289 (VLLV…VFPS), 292–312 (VIGG…TLGI), 329–349 (LLCG…GGWY), and 356–376 (ANLF…LVLG).

The protein belongs to the major facilitator superfamily.

The protein localises to the cell membrane. This is an uncharacterized protein from Bacillus subtilis (strain 168).